An 85-amino-acid chain; its full sequence is Large ribosomal subunit protein bL27 (85 aa).

The interval 1–20 is disordered; it reads MAHKKAGGSTRNGRDSESKR.

Belongs to the bacterial ribosomal protein bL27 family.

The protein is Large ribosomal subunit protein bL27 of Yersinia pseudotuberculosis serotype O:1b (strain IP 31758).